A 672-amino-acid polypeptide reads, in one-letter code: Methionine--tRNA ligase (672 aa).

The 'HIGH' region motif lies at 12–22 (AYTNGPLHLGH). The Zn(2+) site is built by Cys-144, Cys-147, Cys-156, and Cys-159. Positions 330 to 334 (KMSTS) match the 'KMSKS' region motif. Thr-333 contacts ATP. The region spanning 573–672 (DFAKIELKVA…KDLPVGSTIC (100 aa)) is the tRNA-binding domain.

The protein belongs to the class-I aminoacyl-tRNA synthetase family. MetG type 1 subfamily. In terms of assembly, homodimer. Zn(2+) serves as cofactor.

The protein localises to the cytoplasm. It carries out the reaction tRNA(Met) + L-methionine + ATP = L-methionyl-tRNA(Met) + AMP + diphosphate. Is required not only for elongation of protein synthesis but also for the initiation of all mRNA translation through initiator tRNA(fMet) aminoacylation. This is Methionine--tRNA ligase from Methanococcus aeolicus (strain ATCC BAA-1280 / DSM 17508 / OCM 812 / Nankai-3).